A 367-amino-acid chain; its full sequence is Glycolate oxidase 1 (367 aa).

The residue at position 1 (methionine 1) is an N-acetylmethionine. Tyrosine 24 is a binding site for glyoxylate. FMN is bound by residues 77 to 79 (PTA), serine 106, 127 to 129 (QLY), and threonine 155. Tyrosine 129 contacts glyoxylate. Arginine 164 serves as a coordination point for glyoxylate. 2 residues coordinate FMN: lysine 230 and serine 252. Residues histidine 254 and arginine 257 each contribute to the glyoxylate site. The Proton acceptor role is filled by histidine 254. FMN-binding positions include 285 to 289 (DGGVR) and 308 to 309 (GR).

It belongs to the FMN-dependent alpha-hydroxy acid dehydrogenase family. In terms of assembly, homotetramer. FMN serves as cofactor.

The protein localises to the peroxisome. It catalyses the reaction glycolate + O2 = glyoxylate + H2O2. It functions in the pathway photosynthesis; photorespiration; glycine from 2-phosphoglycolate: step 2/3. In terms of biological role, catalyzes the oxidation of glycolate to glyoxylate, with a reduction of O2 to H2O2. Is a key enzyme in photorespiration in green plants. The chain is Glycolate oxidase 1 (GLO1) from Arabidopsis thaliana (Mouse-ear cress).